We begin with the raw amino-acid sequence, 136 residues long: Large ribosomal subunit protein uL16 (136 aa).

Belongs to the universal ribosomal protein uL16 family. As to quaternary structure, part of the 50S ribosomal subunit.

In terms of biological role, binds 23S rRNA and is also seen to make contacts with the A and possibly P site tRNAs. This Citrobacter koseri (strain ATCC BAA-895 / CDC 4225-83 / SGSC4696) protein is Large ribosomal subunit protein uL16.